The primary structure comprises 433 residues: Bifunctional protein GlmU (433 aa).

The pyrophosphorylase stretch occupies residues 1–226 (MLSVIILAAG…EECFLGVNSQ (226 aa)). Residues 7 to 10 (LAAG), lysine 21, and 80 to 81 (GT) contribute to the UDP-N-acetyl-alpha-D-glucosamine site. Aspartate 106 lines the Mg(2+) pocket. UDP-N-acetyl-alpha-D-glucosamine contacts are provided by glycine 138, glutamate 152, asparagine 167, and asparagine 224. Asparagine 224 contributes to the Mg(2+) binding site. The tract at residues 227–247 (TERAKAEEIMLERLRKNAMDL) is linker. Residues 248–433 (GVVMQLPNSI…NGYFKFFKKP (186 aa)) are N-acetyltransferase. UDP-N-acetyl-alpha-D-glucosamine-binding residues include arginine 311 and lysine 328. The active-site Proton acceptor is the histidine 339. Residues tyrosine 342 and asparagine 353 each contribute to the UDP-N-acetyl-alpha-D-glucosamine site. Acetyl-CoA is bound by residues alanine 356, 362-363 (NY), serine 381, serine 399, and arginine 416.

In the N-terminal section; belongs to the N-acetylglucosamine-1-phosphate uridyltransferase family. The protein in the C-terminal section; belongs to the transferase hexapeptide repeat family. Homotrimer. Mg(2+) is required as a cofactor.

It localises to the cytoplasm. The catalysed reaction is alpha-D-glucosamine 1-phosphate + acetyl-CoA = N-acetyl-alpha-D-glucosamine 1-phosphate + CoA + H(+). It carries out the reaction N-acetyl-alpha-D-glucosamine 1-phosphate + UTP + H(+) = UDP-N-acetyl-alpha-D-glucosamine + diphosphate. It functions in the pathway nucleotide-sugar biosynthesis; UDP-N-acetyl-alpha-D-glucosamine biosynthesis; N-acetyl-alpha-D-glucosamine 1-phosphate from alpha-D-glucosamine 6-phosphate (route II): step 2/2. Its pathway is nucleotide-sugar biosynthesis; UDP-N-acetyl-alpha-D-glucosamine biosynthesis; UDP-N-acetyl-alpha-D-glucosamine from N-acetyl-alpha-D-glucosamine 1-phosphate: step 1/1. The protein operates within bacterial outer membrane biogenesis; LPS lipid A biosynthesis. In terms of biological role, catalyzes the last two sequential reactions in the de novo biosynthetic pathway for UDP-N-acetylglucosamine (UDP-GlcNAc). The C-terminal domain catalyzes the transfer of acetyl group from acetyl coenzyme A to glucosamine-1-phosphate (GlcN-1-P) to produce N-acetylglucosamine-1-phosphate (GlcNAc-1-P), which is converted into UDP-GlcNAc by the transfer of uridine 5-monophosphate (from uridine 5-triphosphate), a reaction catalyzed by the N-terminal domain. This is Bifunctional protein GlmU from Helicobacter pylori (strain ATCC 700392 / 26695) (Campylobacter pylori).